We begin with the raw amino-acid sequence, 49 residues long: Small, acid-soluble spore protein O (49 aa).

The segment at 1–49 is disordered; the sequence is MGKRKANHTISGMNAASAQGQGTGYNEEFANEPFTPAERQNNKKRKKNQ. Residues 8-20 are compositionally biased toward polar residues; sequence HTISGMNAASAQG.

This sequence belongs to the SspO family.

It localises to the spore core. This chain is Small, acid-soluble spore protein O, found in Bacillus cereus (strain ATCC 14579 / DSM 31 / CCUG 7414 / JCM 2152 / NBRC 15305 / NCIMB 9373 / NCTC 2599 / NRRL B-3711).